A 430-amino-acid polypeptide reads, in one-letter code: Oleandomycin glycosyltransferase (430 aa).

Residues 385 to 430 form a disordered region; that stretch reads GGTRRAADLIEAELPARHERQEPVGDRPNVGDRPAGVRSDRQRSAL. The segment covering 386–409 has biased composition (basic and acidic residues); it reads GTRRAADLIEAELPARHERQEPVG.

Belongs to the UDP-glycosyltransferase family.

Its function is as follows. Specifically inactivates oleandomycin via 2'-O-glycosylation using UDP-glucose. This chain is Oleandomycin glycosyltransferase (oleD), found in Streptomyces antibioticus.